Consider the following 823-residue polypeptide: Ankyrin repeat domain-containing protein 20B (823 aa).

ANK repeat units follow at residues 32–65 (SELQ…ARDK), 66–95 (QHRT…QIDI), 99–128 (ENRT…NPNL), 132–161 (YGNT…HIEA), 165–194 (DSNT…STHA), and 198–227 (LRRS…DVFA). Disordered stretches follow at residues 302-343 (PEKV…GVED) and 355-401 (VQTL…QLSE). The span at 372–382 (QERHERSEKKQ) shows a compositional bias: basic and acidic residues. Coiled coils occupy residues 431–480 (KKLK…KQLE), 565–724 (EMIT…NNST), and 776–805 (LVLE…EKAE).

The chain is Ankyrin repeat domain-containing protein 20B (ANKRD20A8P) from Homo sapiens (Human).